A 212-amino-acid polypeptide reads, in one-letter code: Thymidylate kinase (212 aa).

ATP is bound at residue 10–17; it reads GLEGAGKT.

It belongs to the thymidylate kinase family.

It catalyses the reaction dTMP + ATP = dTDP + ADP. Phosphorylation of dTMP to form dTDP in both de novo and salvage pathways of dTTP synthesis. This Yersinia pseudotuberculosis serotype O:1b (strain IP 31758) protein is Thymidylate kinase.